The primary structure comprises 184 residues: C-phycoerythrin beta chain (184 aa).

Residues Cys48 and Cys59 each contribute to the (2R,3E)-phycoerythrobilin site. Asn70 is subject to N4-methylasparagine. Positions 80 and 165 each coordinate (2R,3E)-phycoerythrobilin.

Belongs to the phycobiliprotein family. As to quaternary structure, heterodimer of an alpha and a beta chain. Post-translationally, contains three covalently linked bilin chromophores.

It localises to the cellular thylakoid membrane. Its function is as follows. Light-harvesting photosynthetic bile pigment-protein from the phycobiliprotein complex. This Microchaete diplosiphon (Fremyella diplosiphon) protein is C-phycoerythrin beta chain (cpeB).